Reading from the N-terminus, the 111-residue chain is Large ribosomal subunit protein uL22 (111 aa).

Belongs to the universal ribosomal protein uL22 family. In terms of assembly, part of the 50S ribosomal subunit.

Functionally, this protein binds specifically to 23S rRNA; its binding is stimulated by other ribosomal proteins, e.g. L4, L17, and L20. It is important during the early stages of 50S assembly. It makes multiple contacts with different domains of the 23S rRNA in the assembled 50S subunit and ribosome. The globular domain of the protein is located near the polypeptide exit tunnel on the outside of the subunit, while an extended beta-hairpin is found that lines the wall of the exit tunnel in the center of the 70S ribosome. This is Large ribosomal subunit protein uL22 from Alkalilimnicola ehrlichii (strain ATCC BAA-1101 / DSM 17681 / MLHE-1).